Consider the following 394-residue polypeptide: D-aspartate oxidase (394 aa).

Positions 19, 57, 58, and 62 each coordinate FAD. A helical transmembrane segment spans residues Leu190–Leu210. Residue Asn214 is glycosylated (N-linked (GlcNAc...) asparagine). The FAD site is built by Arg342, Gly373, and Gln375.

This sequence belongs to the DAMOX/DASOX family. FAD is required as a cofactor.

The protein localises to the membrane. It carries out the reaction D-aspartate + O2 + H2O = oxaloacetate + H2O2 + NH4(+). Selectively catalyzes the oxidative deamination of acidic amino acids. Protects the organism from the toxicity of D-amino acids. Enables the organism to utilize D-amino acids as a source of nutrients. Enables the organism to utilize D-aspartate and D-asparagine as a source of nitrogen. May play a role in its interaction with the host. In Cryptococcus neoformans var. grubii serotype A (strain H99 / ATCC 208821 / CBS 10515 / FGSC 9487) (Filobasidiella neoformans var. grubii), this protein is D-aspartate oxidase.